We begin with the raw amino-acid sequence, 95 residues long: Small ribosomal subunit protein uS15 (95 aa).

This sequence belongs to the universal ribosomal protein uS15 family. Part of the 30S ribosomal subunit. Forms a bridge to the 50S subunit in the 70S ribosome, contacting the 23S rRNA.

In terms of biological role, one of the primary rRNA binding proteins, it binds directly to 16S rRNA where it helps nucleate assembly of the platform of the 30S subunit by binding and bridging several RNA helices of the 16S rRNA. Forms an intersubunit bridge (bridge B4) with the 23S rRNA of the 50S subunit in the ribosome. The sequence is that of Small ribosomal subunit protein uS15 from Streptomyces coelicolor (strain ATCC BAA-471 / A3(2) / M145).